We begin with the raw amino-acid sequence, 226 residues long: Putative ABC transporter ATP-binding protein DR_2469 (226 aa).

The 224-residue stretch at 2-225 (IELRHVSHHY…LRVYRERMTW (224 aa)) folds into the ABC transporter domain. Residue 33–40 (GSNGSGKS) coordinates ATP.

Belongs to the ABC transporter superfamily.

The protein localises to the cell membrane. Functionally, probably part of an ABC transporter complex. Responsible for energy coupling to the transport system. The sequence is that of Putative ABC transporter ATP-binding protein DR_2469 from Deinococcus radiodurans (strain ATCC 13939 / DSM 20539 / JCM 16871 / CCUG 27074 / LMG 4051 / NBRC 15346 / NCIMB 9279 / VKM B-1422 / R1).